The following is a 157-amino-acid chain: Ribosome maturation factor RimP (157 aa).

This sequence belongs to the RimP family.

Its subcellular location is the cytoplasm. Its function is as follows. Required for maturation of 30S ribosomal subunits. The protein is Ribosome maturation factor RimP of Synechococcus sp. (strain JA-3-3Ab) (Cyanobacteria bacterium Yellowstone A-Prime).